The sequence spans 898 residues: Protein translocase subunit SecA (898 aa).

ATP-binding positions include Gln87, 105 to 109, and Asp512; that span reads GEGKT. A compositionally biased stretch (polar residues) spans 855 to 865; that stretch reads MQYQNNEGTSS. Residues 855 to 898 are disordered; that stretch reads MQYQNNEGTSSLHEKSEHKIGRNESCPCGSGKKYKHCHGSKAKY. A compositionally biased stretch (basic and acidic residues) spans 866–876; the sequence is LHEKSEHKIGR. Residues Cys880, Cys882, Cys891, and His892 each contribute to the Zn(2+) site. Residues 886–898 are compositionally biased toward basic residues; it reads KKYKHCHGSKAKY.

Belongs to the SecA family. In terms of assembly, monomer and homodimer. Part of the essential Sec protein translocation apparatus which comprises SecA, SecYEG and auxiliary proteins SecDF-YajC and YidC. Zn(2+) is required as a cofactor.

It localises to the cell inner membrane. It is found in the cytoplasm. The enzyme catalyses ATP + H2O + cellular proteinSide 1 = ADP + phosphate + cellular proteinSide 2.. Its function is as follows. Part of the Sec protein translocase complex. Interacts with the SecYEG preprotein conducting channel. Has a central role in coupling the hydrolysis of ATP to the transfer of proteins into and across the cell membrane, serving both as a receptor for the preprotein-SecB complex and as an ATP-driven molecular motor driving the stepwise translocation of polypeptide chains across the membrane. This chain is Protein translocase subunit SecA, found in Histophilus somni (strain 2336) (Haemophilus somnus).